The primary structure comprises 138 residues: Large ribosomal subunit protein eL32 (138 aa).

This sequence belongs to the eukaryotic ribosomal protein eL32 family.

The sequence is that of Large ribosomal subunit protein eL32 (rpl32e) from Saccharolobus solfataricus (strain ATCC 35092 / DSM 1617 / JCM 11322 / P2) (Sulfolobus solfataricus).